A 217-amino-acid chain; its full sequence is MSKITSSGVRENVHKLLEYSTETKKRNFLETVELQVGLKNYDPQRDKRFSGTLKLPQVPRPNMTICIFGDAFDVDRAKSLGVDAMSVDDLKKLNKNKKLIKKLAKKYNAFIASEVLIKQIPRLLGPTLSKAGKFPTPVSHNDDLYSKVTDVKSTIKFQLKKVLCLAVAVGNVDMEEDVLVNQIMMAANFLVSLLKKNWQNVGSLVIKSTMGPSFRIY.

This sequence belongs to the universal ribosomal protein uL1 family. In terms of assembly, component of the large ribosomal subunit (LSU). Mature ribosomes consist of a small (40S) and a large (60S) subunit. The 40S subunit contains about 32 different proteins and 1 molecule of RNA (18S). The 60S subunit contains 45 different proteins and 3 molecules of RNA (25S, 5.8S and 5S). uL1 forms part of the L1 stalk.

The protein resides in the cytoplasm. Functionally, component of the ribosome, a large ribonucleoprotein complex responsible for the synthesis of proteins in the cell. The small ribosomal subunit (SSU) binds messenger RNAs (mRNAs) and translates the encoded message by selecting cognate aminoacyl-transfer RNA (tRNA) molecules. The large subunit (LSU) contains the ribosomal catalytic site termed the peptidyl transferase center (PTC), which catalyzes the formation of peptide bonds, thereby polymerizing the amino acids delivered by tRNAs into a polypeptide chain. The nascent polypeptides leave the ribosome through a tunnel in the LSU and interact with protein factors that function in enzymatic processing, targeting, and the membrane insertion of nascent chains at the exit of the ribosomal tunnel. uL1 forms part of the L1 stalk, a mobile element that plays a role in evacuating the exit-site tRNA. The polypeptide is Large ribosomal subunit protein uL1 (RPL10A) (Candida albicans (strain SC5314 / ATCC MYA-2876) (Yeast)).